We begin with the raw amino-acid sequence, 149 residues long: Transcriptional repressor NrdR (149 aa).

Residues 3 to 34 fold into a zinc finger; the sequence is CPFCFAVDTKVIDSRLVGEGSSVRRRRQCLVC. Residues 49 to 139 form the ATP-cone domain; it reads PRVVKSNDVR…VYRSFEDIKE (91 aa).

It belongs to the NrdR family. Zn(2+) serves as cofactor.

Its function is as follows. Negatively regulates transcription of bacterial ribonucleotide reductase nrd genes and operons by binding to NrdR-boxes. This chain is Transcriptional repressor NrdR, found in Escherichia coli O139:H28 (strain E24377A / ETEC).